The sequence spans 484 residues: Phospholipase A1-Ialpha2, chloroplastic (484 aa).

The transit peptide at 1-63 (MALIQNPNMK…LAPVILNSPV (63 aa)) directs the protein to the chloroplast. A GXSXG motif is present at residues 295-299 (GHSMG). The Acyl-ester intermediate role is filled by S297. Active-site charge relay system residues include D360 and H411.

Belongs to the AB hydrolase superfamily. Lipase family. Ubiquitous. Highest expression in flowers and leaves.

Its subcellular location is the plastid. It is found in the chloroplast. The protein localises to the plastoglobule. The enzyme catalyses a 1,2-diacyl-3-O-[alpha-D-galactosyl-(1-&gt;6)-beta-D-galactosyl]-sn-glycerol + H2O = acyl-3-O-[alpha-D-galactosyl-(1-&gt;6)-beta-D-galactosyl]-sn-glycerol + a fatty acid + H(+). The catalysed reaction is a 1,2-diacyl-3-O-(beta-D-galactosyl)-sn-glycerol + H2O = an acyl-3-O-(beta-D-galactosyl)-sn-glycerol + a fatty acid + H(+). Functionally, acylhydrolase that catalyzes the hydrolysis of phosphatidylcholine at the sn-1 position. Has a strong galactolipase activity toward monogalactosyldiacylglycerol (MGDG) and digalactosyldiacylglycerol (DGDG). Low triacylglycerol (TAG) lipase activity. Plays a role in plant growth and in leaf senescence. This chain is Phospholipase A1-Ialpha2, chloroplastic, found in Arabidopsis thaliana (Mouse-ear cress).